Consider the following 120-residue polypeptide: UPF0342 protein Csac_0863 (120 aa).

The protein belongs to the UPF0342 family.

The polypeptide is UPF0342 protein Csac_0863 (Caldicellulosiruptor saccharolyticus (strain ATCC 43494 / DSM 8903 / Tp8T 6331)).